A 189-amino-acid polypeptide reads, in one-letter code: Xanthine phosphoribosyltransferase (189 aa).

The xanthine site is built by Leu20 and Asn27. 128 to 132 (ANGKA) serves as a coordination point for 5-phospho-alpha-D-ribose 1-diphosphate. Lys156 contributes to the xanthine binding site.

It belongs to the purine/pyrimidine phosphoribosyltransferase family. Xpt subfamily. As to quaternary structure, homodimer.

The protein resides in the cytoplasm. The catalysed reaction is XMP + diphosphate = xanthine + 5-phospho-alpha-D-ribose 1-diphosphate. Its pathway is purine metabolism; XMP biosynthesis via salvage pathway; XMP from xanthine: step 1/1. Converts the preformed base xanthine, a product of nucleic acid breakdown, to xanthosine 5'-monophosphate (XMP), so it can be reused for RNA or DNA synthesis. The protein is Xanthine phosphoribosyltransferase of Pseudomonas syringae pv. syringae (strain B728a).